A 436-amino-acid chain; its full sequence is Carboxypeptidase A5 (436 aa).

Residues 1–33 form the signal peptide; that stretch reads MQGTPGGGTRPGPSPVDRRTLLVFSFILAAALG. A propeptide spans 34–126 (activation peptide); it reads QMNFTGDQVL…ERQAMAKSRR (93 aa). The Peptidase M14 domain maps to 138–431; that stretch reads SYHTLEEIYS…MALRTIMEHT (294 aa). Zn(2+) contacts are provided by histidine 196 and glutamate 199. Substrate is bound by residues 196-199, arginine 254, and 271-272; these read HSRE and NR. A disulfide bridge connects residues cysteine 265 and cysteine 288. Histidine 323 is a Zn(2+) binding site. Substrate contacts are provided by residues 324–325 and tyrosine 375; that span reads SY. The Proton donor/acceptor role is filled by glutamate 397.

The protein belongs to the peptidase M14 family. It depends on Zn(2+) as a cofactor. In terms of tissue distribution, expression is very low or not detectable.

Its subcellular location is the secreted. This chain is Carboxypeptidase A5 (CPA5), found in Homo sapiens (Human).